The chain runs to 331 residues: tRNA-cytidine(32) 2-sulfurtransferase (331 aa).

The segment at 1–33 (MNAPHMNDTAADAATLDDAAAPAGRPALTRREQ) is disordered. Residues 8-23 (DTAADAATLDDAAAPA) are compositionally biased toward low complexity. The PP-loop motif signature appears at 71 to 76 (SGGKDS). [4Fe-4S] cluster contacts are provided by Cys146, Cys149, and Cys237.

It belongs to the TtcA family. Homodimer. Mg(2+) serves as cofactor. Requires [4Fe-4S] cluster as cofactor.

The protein resides in the cytoplasm. It carries out the reaction cytidine(32) in tRNA + S-sulfanyl-L-cysteinyl-[cysteine desulfurase] + AH2 + ATP = 2-thiocytidine(32) in tRNA + L-cysteinyl-[cysteine desulfurase] + A + AMP + diphosphate + H(+). It participates in tRNA modification. Its function is as follows. Catalyzes the ATP-dependent 2-thiolation of cytidine in position 32 of tRNA, to form 2-thiocytidine (s(2)C32). The sulfur atoms are provided by the cysteine/cysteine desulfurase (IscS) system. This chain is tRNA-cytidine(32) 2-sulfurtransferase, found in Burkholderia cenocepacia (strain HI2424).